Here is a 2496-residue protein sequence, read N- to C-terminus: Non-reducing polyketide synthase adrD (2496 aa).

The N-terminal acylcarrier protein transacylase domain (SAT) stretch occupies residues 15–254; sequence LVFGPQIAEI…HHASHITAVQ (240 aa). Positions 387–808 constitute a Ketosynthase family 3 (KS3) domain; sequence ATPIAITGMG…GSNAALVVKQ (422 aa). Active-site for beta-ketoacyl synthase activity residues include C552, H687, and H726. Residues 914 to 1223 are malonyl-CoA:ACP transacylase (MAT) domain; sequence LCFGGQNGNE…QSLDLGGPQG (310 aa). Catalysis depends on S1001, which acts as the For acyl/malonyl transferase activity. Residues 1295–1423 form an N-terminal hotdog fold region; it reads KEFVQLLTKQ…GEISLHPFGQ (129 aa). The region spanning 1295-1602 is the PKS/mFAS DH domain; sequence KEFVQLLTKQ…FTSVSIAGLA (308 aa). Residues 1296 to 1601 are product template (PT) domain; it reads EFVQLLTKQP…EFTSVSIAGL (306 aa). H1326 (proton acceptor; for dehydratase activity) is an active-site residue. Residues 1451–1602 form a C-terminal hotdog fold region; it reads ESSGLKGFAV…FTSVSIAGLA (152 aa). Residue D1509 is the Proton donor; for dehydratase activity of the active site. Positions 1615–1629 are enriched in basic and acidic residues; it reads EKASPDLSLRNDSKV. The disordered stretch occupies residues 1615–1645; it reads EKASPDLSLRNDSKVDVNPTPQNTAPVVQPT. Positions 1633 to 1645 are enriched in polar residues; that stretch reads PTPQNTAPVVQPT. The 75-residue stretch at 1652–1726 folds into the Carrier domain; sequence PGYFVVVQEM…ALVQTIFPDA (75 aa). S1686 bears the O-(pantetheine 4'-phosphoryl)serine mark. The segment at 1888 to 2121 is methyltransferase (CMeT) domain; it reads QHRSEHHLLK…GFQWVDWTHN (234 aa). Residues 2151–2496 form a thioesterase (TE) domain region; it reads RVMNEETVPY…YEFLRDHVRY (346 aa). Residues S2274 and D2433 each act as for thioesterase activity in the active site.

It catalyses the reaction 3 malonyl-CoA + acetyl-CoA + 2 S-adenosyl-L-methionine = 3,5-dimethylorsellinate + 2 S-adenosyl-L-homocysteine + 3 CO2 + 4 CoA. The protein operates within secondary metabolite biosynthesis; terpenoid biosynthesis. In terms of biological role, non-reducing polyketide synthase; part of the gene cluster that mediates the biosynthesis of andrastins, meroterpenoid compounds that exhibit inhibitory activity against ras farnesyltransferase, suggesting that they could be promising leads for antitumor agents. The first step of the pathway is the synthesis of 3,5-dimethylorsellinic acid (DMOA) by the polyketide synthase adrD via condensation of one acetyl-CoA starter unit with 3 malonyl-CoA units and 2 methylations. DMAO is then converted to farnesyl-DMAO by the prenyltransferase adrG. The methyltransferase adrK catalyzes the methylation of the carboxyl group of farnesyl-DMAO to farnesyl-DMAO methyl ester which is further converted to epoxyfarnesyl-DMAO methyl ester by the FAD-dependent monooxygenase adrH. The terpene cyclase adrI then catalyzes the carbon skeletal rearrangement to generate the andrastin E, the first compound in the pathway having the andrastin scaffold, with the tetracyclic ring system. The post-cyclization tailoring enzymes adrF, adrE, adrJ, and adrA, are involved in the conversion of andrastin E into andrastin A. The short chain dehydrogenase adrF is responsible for the oxidation of the C-3 a hydroxyl group of andrastin E to yield the corresponding ketone, andrastin D. The ketoreductase adrE stereoselectively reduces the carbonyl moiety to reverse the stereochemistry of the C-3 position to yield andrastin F. The acetyltransferase adrJ is the acetyltransferase that attaches the acetyl group to the C-3 hydroxyl group of andrastin F to yield andrastin C. Finally, the cytochrome P450 monooxygenase adrA catalyzes two sequential oxidation reactions of the C-23 methyl group, to generate the corresponding alcohol andrastin B, and aldehyde andrastin A. This Penicillium rubens (strain ATCC 28089 / DSM 1075 / NRRL 1951 / Wisconsin 54-1255) (Penicillium chrysogenum) protein is Non-reducing polyketide synthase adrD.